We begin with the raw amino-acid sequence, 283 residues long: TIMELESS-interacting protein (283 aa).

A disordered region spans residues 1–68 (MAMIDPLENN…SSSAARKAVK (68 aa)). Residues 15–24 (PDYENTEDET) show a composition bias toward acidic residues. The interval 74–150 (LDANRLVSER…KEVQTCLKRI (77 aa)) is interaction with TIMELESS. Disordered regions lie at residues 186–205 (GNVG…EQQQ) and 217–238 (RRQA…PSYP).

It belongs to the CSM3 family. In terms of assembly, interacts with TIMELESS, which impairs TIMELESS self-association.

It localises to the cytoplasm. The protein localises to the nucleus. Its function is as follows. Plays an important role in the control of DNA replication and the maintenance of replication fork stability. Important for cell survival after DNA damage or replication stress. May be required for the replication checkpoint induced by hydroxyurea or ultraviolet light. This Gallus gallus (Chicken) protein is TIMELESS-interacting protein (TIPIN).